The primary structure comprises 198 residues: Elongation factor Ts (198 aa).

The interval 81–84 (TDFV) is involved in Mg(2+) ion dislocation from EF-Tu.

Belongs to the EF-Ts family.

The protein localises to the cytoplasm. Functionally, associates with the EF-Tu.GDP complex and induces the exchange of GDP to GTP. It remains bound to the aminoacyl-tRNA.EF-Tu.GTP complex up to the GTP hydrolysis stage on the ribosome. This Dictyoglomus turgidum (strain DSM 6724 / Z-1310) protein is Elongation factor Ts.